The chain runs to 368 residues: Ribosomal RNA large subunit methyltransferase M (368 aa).

S-adenosyl-L-methionine contacts are provided by residues Ser189, 222–225 (CPGG), Asp241, Asp261, and Asp278. The Proton acceptor role is filled by Lys307.

Belongs to the class I-like SAM-binding methyltransferase superfamily. RNA methyltransferase RlmE family. RlmM subfamily. In terms of assembly, monomer.

It localises to the cytoplasm. It carries out the reaction cytidine(2498) in 23S rRNA + S-adenosyl-L-methionine = 2'-O-methylcytidine(2498) in 23S rRNA + S-adenosyl-L-homocysteine + H(+). Its function is as follows. Catalyzes the 2'-O-methylation at nucleotide C2498 in 23S rRNA. The chain is Ribosomal RNA large subunit methyltransferase M from Yersinia pseudotuberculosis serotype O:1b (strain IP 31758).